The following is a 1448-amino-acid chain: MWKNREAQLCLFSVLLAFLPSASLLFGNSKYMVLVPSQLYTETPEKICLHLYHLNETVTVTASLISQRGTRKLFDEPVVDKDLFHCVSFIPRLPSSEEEESLDINIEGAKHKFSKRHVVLVKNKESVVFVQTDKPMYKPGQSVKFRVVSMDKNLYPLKELVQDPKMNRIMQWQDVKTENGLKQLSFSLSAEPIQGPYKIVVLKQSGVKEEHSFTVMEFVLPRFGVDVKVPNAISVYDEIISVTACDRYTYGKPVLGRVKVRLCHGNPSFSSETKSACKEENSQLDNNGCSTQEVNITEFQLKENYLKVRQAFHVNATVTEEGTGMEFGGYGRIEVERTRNKFLFLKADSHFRHGIPFFVKVRLVDIKGDPIPNEQVFIKAQEAGYTNATTTDQHGLAKFSIDTSSISGYSLNIKVYHKEENLCIHSSCTAERHAEAHHTAYAVYSLSKSYIYLDTEAGVLPCNQIHTVQAHFILKGQVLGVLPQIVFHYLVMAQGSILQTGNHTHQVESGAPVQGNFALEIPVEFSMVPMAKMLIYTILPDGEVIADSVKFQVEKCLRNKVHLSFSPSQSLPASQTHMRVTASPQSLCGLRAVDQSVLLLRPEAELSPSLIYDLPGMQDSNFIPRSHHPFEDEDDCLMYQPRDTEELTYSVPYGREKDVYRYVDMGLTAFTNLKIKHPTYCYDLPKEPPRKDPPRKDPEPKDTVVETIRNYFPETWVWDLVTVSSSGVTEVEMTVPDTITEWKAGALCLSNDTGLGLSSVATLQAFQPFFVELTMPYSVIRGEAFTLKATVMNYLPTSLQMTVQLEASPDFTAVPVGNDQDSYCLGANGRHTSSWLVTPKSLGNVNFSVSVEAQQSPEPCGSEVATVPETGRKDTVIKVLIVEPEGIKKEHTFSSLLCASDAELSETLSLLLPPRVVKDSARAHFSVMGDILSSAIKNTQNLIQMPYGCGEQNMVLFAPNIYVLKYLNETQQLTENIKSKALGYLRAGYQRELNYKHKDGSYSAFGDHNGQGQGNTWLTAFVLKSFAQARAFIFIDESHITDAFTWLSKQQKDSGCFRSSGSLFNNAMKGGVDDEITLSAYITMALLESSLPPVVSKALGCLEASWETIEQGRNGSFVYTKALMAYAFTLAGNQEKRNEILKSLDKEAIKEDNSIHWERPQKPMKSEHYLYTPQASSVEVEMSAYVVLARLTAHPAPSPEDLALSTGTIKWLTKQQNSHGGFSSTQDTVVALDALSKYGAATFSKSQKTPSVTVQSSGSFSQKFQVDKSNRLLLQQVSLPDIPGNYTIRVSGEGCVYAQTTLRYNLPLEKQQPAFALKVKTVPLTCNNPKGQNSFQISLEISYTGSRPASNMVIADVKMLSGFIPLKPTVKKLERLEHVSRTEVTTNNVLLYLDQVTNQTLSFSFIIQQDIPVKNLQPAIVKVYDYYETDEVAFAEYSSPCSSDKQNV.

The first 24 residues, M1–L24, serve as a signal peptide directing secretion. Intrachain disulfides connect C48–C86, C245–C277, and C263–C289. N55 carries N-linked (GlcNAc...) asparagine glycosylation. Residues N295, N315, N387, and N502 are each glycosylated (N-linked (GlcNAc...) asparagine). Cystine bridges form between C462–C556, C588–C748, and C636–C681. The bait region stretch occupies residues P678–R709. Residues N751 and N846 are each glycosylated (N-linked (GlcNAc...) asparagine). 4 disulfides stabilise this stretch: C824/C860, C898/C1295, C1056/C1101, and C1326/C1441. The isoglutamyl cysteine thioester (Cys-Gln) cross-link spans C949–Q952. A glycan (N-linked (GlcNAc...) asparagine) is linked at N968. N-linked (GlcNAc...) asparagine glycans are attached at residues N1114, N1285, and N1398.

This sequence belongs to the protease inhibitor I39 (alpha-2-macroglobulin) family. In terms of assembly, monomer.

The protein localises to the secreted. In terms of biological role, a proteinase activates the inhibitor by specific proteolysis in the bait region, which, by an unknown mechanism leads to reaction at the cysteinyl-glutamyl internal thiol ester site and to a conformational change, whereby the proteinase is trapped and/or covalently bound to the inhibitor. While in the tetrameric proteinase inhibitors steric inhibition is sufficiently strong, monomeric forms need a covalent linkage between the activated glutamyl residue of the original thiol ester and a terminal amino group of a lysine or another nucleophilic group on the proteinase, for inhibition to be effective. This is Murinoglobulin-2 from Rattus norvegicus (Rat).